The following is a 512-amino-acid chain: GMP synthase [glutamine-hydrolyzing] (512 aa).

Residues 7–197 enclose the Glutamine amidotransferase type-1 domain; it reads TIIVLDFGSQ…VFGVCGCSEG (191 aa). Cys-84 serves as the catalytic Nucleophile. Active-site residues include His-171 and Glu-173. In terms of domain architecture, GMPS ATP-PPase spans 198–387; the sequence is WNMENFIEVE…LGIPDEIVWR (190 aa). 225 to 231 contributes to the ATP binding site; that stretch reads SGGVDSS.

Homodimer.

The enzyme catalyses XMP + L-glutamine + ATP + H2O = GMP + L-glutamate + AMP + diphosphate + 2 H(+). It participates in purine metabolism; GMP biosynthesis; GMP from XMP (L-Gln route): step 1/1. Functionally, catalyzes the synthesis of GMP from XMP. The protein is GMP synthase [glutamine-hydrolyzing] of Bacillus cereus (strain G9842).